We begin with the raw amino-acid sequence, 1162 residues long: Leptin receptor (1162 aa).

A signal peptide spans 1-21; the sequence is MMCQKFYVVLLHWEFLYVIAA. Topologically, residues 22-839 are extracellular; sequence LNLAYPISPW…AIDKQQNDAG (818 aa). Cystine bridges form between Cys-37–Cys-90, Cys-89–Cys-99, Cys-131–Cys-142, Cys-186–Cys-195, and Cys-188–Cys-193. N-linked (GlcNAc...) asparagine glycosylation is found at Asn-41, Asn-56, Asn-73, and Asn-98. Asn-187 carries N-linked (GlcNAc...) asparagine glycosylation. The 94-residue stretch at 238 to 331 folds into the Fibronectin type-III 1 domain; it reads PPLGLHMEVT…SPQVFTTQDV (94 aa). N-linked (GlcNAc...) asparagine glycosylation is found at Asn-275 and Asn-345. The region spanning 329–427 is the Ig-like domain; it reads QDVVYFPPKI…HRYAELYVID (99 aa). Cystine bridges form between Cys-350-Cys-410 and Cys-411-Cys-416. An N-linked (GlcNAc...) asparagine glycan is attached at Asn-431. Intrachain disulfides connect Cys-434-Cys-445, Cys-471-Cys-526, and Cys-486-Cys-496. Residues 465 to 482 form a leptin-binding region; that stretch reads HRRSLYCPDSPSIHPTSE. N-linked (GlcNAc...) asparagine glycosylation is found at Asn-514, Asn-622, Asn-657, Asn-668, Asn-686, Asn-695, Asn-698, and Asn-726. 3 consecutive Fibronectin type-III domains span residues 537–632, 637–729, and 738–832; these read PPSN…TLVM, PMRG…NLTF, and AVES…DAID. Positions 620–624 match the WSXWS motif motif; it reads WSNWS. A helical transmembrane segment spans residues 840–860; that stretch reads LYVIVPIIISSCVLLLGTLLI. The Cytoplasmic portion of the chain corresponds to 861 to 1162; the sequence is SHQRMKKLFW…MENKMCDLTV (302 aa). The Box 1 motif signature appears at 869–877; that stretch reads FWDDVPNPK. The residue at position 880 (Ser-880) is a Phosphoserine. A required for JAK2 activation region spans residues 891-896; sequence ETFEHL. The tract at residues 896 to 904 is required for STAT3 phosphorylation; sequence LFTKHAESV. Tyr-985 bears the Phosphotyrosine; by JAK2 mark. Tyr-1077 is subject to Phosphotyrosine. Tyr-1138 is modified (phosphotyrosine; by JAK2).

It belongs to the type I cytokine receptor family. Type 2 subfamily. Present as a mixture of monomers and dimers. The phosphorylated receptor binds a number of SH2 domain-containing proteins such as JAK2, STAT3, PTPN11, and SOCS3. Interaction with SOCS3 inhibits JAK/STAT signaling and MAPK cascade. Post-translationally, on ligand binding, phosphorylated on two conserved C-terminal tyrosine residues (isoform B only) by JAK2. Tyr-985 is required for complete binding and activation of PTPN11, ERK/FOS activation,for interaction with SOCS3 and SOCS3 mediated inhibition of leptin signaling. Phosphorylation on Tyr-1138 is required for STAT3 binding/activation. Phosphorylation of Tyr-1077 has a more accessory role. In terms of tissue distribution, isoform A: highest level of expression in lung and kidney, also present in heart, brain, spleen, liver, muscle, choroid plexus and hypothalamus. Isoform B: highest levels of expression in hypothalamus and lower levels in brain, testes and adipose tissue. Expressed by neurons of the parabrachial nucleus. Expressed by peripheral blood mononuclear cells and CD4(+) T-cells. Isoform E: expressed in adipose tissue, liver, hypothalamus, cerebral microvessels, heart, and testes.

It is found in the cell membrane. It localises to the basolateral cell membrane. The protein localises to the secreted. Its function is as follows. Receptor for hormone LEP/leptin. On ligand binding, mediates LEP central and peripheral effects through the activation of different signaling pathways such as JAK2/STAT3 and MAPK cascade/FOS. In the hypothalamus, LEP acts as an appetite-regulating factor that induces a decrease in food intake and an increase in energy consumption by inducing anorexinogenic factors and suppressing orexigenic neuropeptides, also regulates bone mass and secretion of hypothalamo-pituitary-adrenal hormones. In the periphery, increases basal metabolism, influences reproductive function, regulates pancreatic beta-cell function and insulin secretion, is pro-angiogenic and affects innate and adaptive immunity. Control of energy homeostasis and melanocortin production (stimulation of POMC and full repression of AgRP transcription) is mediated by STAT3 signaling, whereas distinct signals regulate NPY and the control of fertility, growth and glucose homeostasis. Involved in the regulation of counter-regulatory response to hypoglycemia by inhibiting neurons of the parabrachial nucleus. Has a specific effect on T lymphocyte responses, differentially regulating the proliferation of naive and memory T-cells. Leptin increases Th1 and suppresses Th2 cytokine production. In terms of biological role, may transport LEP across the blood-brain barrier. Binds LEP and mediates LEP endocytosis. Does not induce phosphorylation of and activate STAT3. Functionally, antagonizes Isoform A and isoform B-mediated LEP binding and endocytosis. This Mus musculus (Mouse) protein is Leptin receptor (Lepr).